The primary structure comprises 842 residues: Glycogen phosphorylase, muscle form (842 aa).

The residue at position 2 (S2) is an N-acetylserine. S15 is subject to Phosphoserine; by PHK; in form phosphorylase A. Residues D43 and Y76 each coordinate AMP. Y204 and Y227 each carry phosphotyrosine. AMP is bound at residue R310–C319. A Phosphoserine modification is found at S430. Y473 carries the phosphotyrosine modification. S514 is modified (phosphoserine). K681 is modified (N6-(pyridoxal phosphate)lysine). Phosphoserine occurs at positions 747 and 748.

It belongs to the glycogen phosphorylase family. As to quaternary structure, homodimer. Homotetramer; to form the enzymatically active phosphorylase A. Requires pyridoxal 5'-phosphate as cofactor. Post-translationally, phosphorylation of Ser-15 converts phosphorylase B (unphosphorylated) to phosphorylase A.

The catalysed reaction is [(1-&gt;4)-alpha-D-glucosyl](n) + phosphate = [(1-&gt;4)-alpha-D-glucosyl](n-1) + alpha-D-glucose 1-phosphate. Its activity is regulated as follows. Allosterically regulated through the non-covalent binding of metabolites, being activated by AMP and inhibited by ATP, ADP, and glucose-6-phosphate. The activity is also controlled by post-translational modifications including phosphorylation. Its function is as follows. Allosteric enzyme that catalyzes the rate-limiting step in glycogen catabolism, the phosphorolytic cleavage of glycogen to produce glucose-1-phosphate, and plays a central role in maintaining cellular and organismal glucose homeostasis. This Macaca fascicularis (Crab-eating macaque) protein is Glycogen phosphorylase, muscle form.